A 520-amino-acid polypeptide reads, in one-letter code: Cyclic GMP-AMP synthase-like receptor (520 aa).

Residues Ser68 and 80–82 each bind ATP; that span reads EFD. Mg(2+) is bound by residues Glu80, Asp82, and Asp198. Position 198 (Asp198) interacts with GTP. Lys264 provides a ligand contact to ATP. Mn(2+) is bound by residues Leu288 and Asp294.

It belongs to the mab-21 family. Mg(2+) serves as cofactor. It depends on Mn(2+) as a cofactor.

It catalyses the reaction GTP + ATP = 2',3'-cGAMP + 2 diphosphate. The catalysed reaction is GTP + ATP = pppGp(2'-5')A + diphosphate. It carries out the reaction pppGp(2'-5')A = 2',3'-cGAMP + diphosphate. Nucleotidyltransferase that catalyzes the formation of cyclic GMP-AMP (2',3'-cGAMP) from ATP and GTP and plays a key role in innate immunity. Acts as a key sensor of double-stranded RNA (dsRNA), the presence of dsRNA in the cytoplasm being a danger signal that triggers the immune responses. Directly binds dsRNA, activating the nucleotidyltransferase activity, leading to synthesis of 2',3'-cGAMP, a second messenger that binds to and activates Sting, thereby triggering the immune response via activation of the NF-kappa-B transcription factor. This is Cyclic GMP-AMP synthase-like receptor from Microplitis demolitor (Parasitoid wasp).